The chain runs to 179 residues: Large ribosomal subunit protein uL6 (179 aa).

It belongs to the universal ribosomal protein uL6 family. In terms of assembly, part of the 50S ribosomal subunit.

In terms of biological role, this protein binds to the 23S rRNA, and is important in its secondary structure. It is located near the subunit interface in the base of the L7/L12 stalk, and near the tRNA binding site of the peptidyltransferase center. In Herpetosiphon aurantiacus (strain ATCC 23779 / DSM 785 / 114-95), this protein is Large ribosomal subunit protein uL6.